Here is a 50-residue protein sequence, read N- to C-terminus: Phospholipase A2 trimorphin (50 aa).

Ca(2+)-binding residues include Tyr28, Gly30, and Gly32. Cys29 and Cys45 are oxidised to a cystine. His48 is a catalytic residue. Asp49 provides a ligand contact to Ca(2+).

Ca(2+) is required as a cofactor. As to expression, expressed by the venom gland.

It localises to the secreted. The enzyme catalyses a 1,2-diacyl-sn-glycero-3-phosphocholine + H2O = a 1-acyl-sn-glycero-3-phosphocholine + a fatty acid + H(+). Inhibited by EDTA. Functionally, PLA2 catalyzes the calcium-dependent hydrolysis of the 2-acyl groups in 3-sn-phosphoglycerides. This chain is Phospholipase A2 trimorphin, found in Trimorphodon lambda (Sonoran lyre snake).